We begin with the raw amino-acid sequence, 212 residues long: NAD(P)H dehydrogenase (quinone) 3 (212 aa).

The region spanning 4–192 (MLVLYYSSYG…DGARFQGRHV (189 aa)) is the Flavodoxin-like domain. FMN contacts are provided by residues 10-15 (SSYGHI) and 78-80 (TRF). Y12 provides a ligand contact to NAD(+). W98 serves as a coordination point for substrate. Residues 113 to 119 (STGSQHG) and H134 each bind FMN. Residues 161-182 (YGASTLAEDENHRDRSPSANEL) form a disordered region.

This sequence belongs to the WrbA family. It depends on FMN as a cofactor.

It catalyses the reaction a quinone + NADH + H(+) = a quinol + NAD(+). The enzyme catalyses a quinone + NADPH + H(+) = a quinol + NADP(+). The polypeptide is NAD(P)H dehydrogenase (quinone) 3 (Rhizobium meliloti (strain 1021) (Ensifer meliloti)).